A 1132-amino-acid chain; its full sequence is Ubiquitin carboxyl-terminal hydrolase 43 (1132 aa).

Residues 1–103 (MDPGVGNALG…GARPPGAQGL (103 aa)) are disordered. A compositionally biased stretch (basic residues) spans 17–28 (RPRRRRSLRRLL). 2 stretches are compositionally biased toward low complexity: residues 29-44 (NRFLLALGSRSRSGDS) and 63-78 (FACAPGPAPASAGSPG). A USP domain is found at 101–710 (QGLKNHGNTC…GAYILFYQKR (610 aa)). Residue cysteine 110 is the Nucleophile of the active site. Catalysis depends on histidine 668, which acts as the Proton acceptor. Arginine 746 is subject to Asymmetric dimethylarginine. 4 disordered regions span residues 839-891 (RRRP…TGVP), 935-1008 (TVMP…RGQG), 1024-1044 (RTVRTESSPPAPPISLGSDRL), and 1057-1106 (RESP…GEQI). Residues 941–950 (GDEKPARPEG) are compositionally biased toward basic and acidic residues. Residues 958 to 967 (GSSQVGSQSS) are compositionally biased toward low complexity. Serine 970 carries the post-translational modification Phosphoserine. Residues 994-1006 (AAMEERAPDKDRG) are compositionally biased toward basic and acidic residues.

This sequence belongs to the peptidase C19 family.

The catalysed reaction is Thiol-dependent hydrolysis of ester, thioester, amide, peptide and isopeptide bonds formed by the C-terminal Gly of ubiquitin (a 76-residue protein attached to proteins as an intracellular targeting signal).. In terms of biological role, may recognize and hydrolyze the peptide bond at the C-terminal Gly of ubiquitin. Involved in the processing of poly-ubiquitin precursors as well as that of ubiquitinated proteins. This chain is Ubiquitin carboxyl-terminal hydrolase 43 (Usp43), found in Mus musculus (Mouse).